A 326-amino-acid polypeptide reads, in one-letter code: Thrombopoietin (326 aa).

The first 21 residues, 1-21 (MELTDLLLVAILLLTARLTLS), serve as a signal peptide directing secretion. 2 disulfides stabilise this stretch: Cys28–Cys172 and Cys50–Cys106. N-linked (GlcNAc...) asparagine glycans are attached at residues Asn197, Asn206, Asn235, Asn249, and Asn256. The disordered stretch occupies residues 307 to 326 (FPPSPTFPTPGSPPQLPPVS). Over residues 308-326 (PPSPTFPTPGSPPQLPPVS) the composition is skewed to pro residues.

It belongs to the EPO/TPO family.

The protein localises to the secreted. Lineage-specific cytokine affecting the proliferation and maturation of megakaryocytes from their committed progenitor cells. It acts at a late stage of megakaryocyte development. It may be the major physiological regulator of circulating platelets. This chain is Thrombopoietin (Thpo), found in Rattus norvegicus (Rat).